The chain runs to 238 residues: Probable septum site-determining protein MinC (238 aa).

It belongs to the MinC family. Interacts with MinD and FtsZ.

Cell division inhibitor that blocks the formation of polar Z ring septums. Rapidly oscillates between the poles of the cell to destabilize FtsZ filaments that have formed before they mature into polar Z rings. Prevents FtsZ polymerization. The polypeptide is Probable septum site-determining protein MinC (Blochmanniella floridana).